Consider the following 183-residue polypeptide: Transmembrane protein 252 (183 aa).

2 helical membrane-spanning segments follow: residues 8–28 (ILCA…GFFI) and 39–59 (LVVA…GIFW).

The protein resides in the membrane. The chain is Transmembrane protein 252 (Tmem252) from Mus musculus (Mouse).